The following is a 294-amino-acid chain: uncharacterized protein (294 aa).

The interval 1–32 (MSHLKDPTTQYYTGEYPKQKQPTPGIQAKMTP) is disordered. Position 39 is an N6-acetyllysine (Lys39). 53-77 (LVTGGDSGIGRAAAIAYAREGADVA) serves as a coordination point for NADP(+). Ser186 contributes to the substrate binding site. Catalysis depends on Tyr199, which acts as the Proton acceptor.

This sequence belongs to the short-chain dehydrogenases/reductases (SDR) family.

This is an uncharacterized protein from Escherichia coli (strain K12).